A 433-amino-acid polypeptide reads, in one-letter code: Cyclin-dependent kinase F-3 (433 aa).

The region spanning 4-283 (YKVIREIGDG…AEQSLQHPFF (280 aa)) is the Protein kinase domain. ATP is bound by residues 10 to 18 (IGDGTCGNV) and K33. D125 serves as the catalytic Proton acceptor. Phosphoserine is present on S151. A Phosphothreonine modification is found at T156.

It belongs to the protein kinase superfamily. CMGC Ser/Thr protein kinase family. CDC2/CDKX subfamily.

The enzyme catalyses L-seryl-[protein] + ATP = O-phospho-L-seryl-[protein] + ADP + H(+). It carries out the reaction L-threonyl-[protein] + ATP = O-phospho-L-threonyl-[protein] + ADP + H(+). It catalyses the reaction [DNA-directed RNA polymerase] + ATP = phospho-[DNA-directed RNA polymerase] + ADP + H(+). In Oryza sativa subsp. japonica (Rice), this protein is Cyclin-dependent kinase F-3 (CDKF-3).